Consider the following 50-residue polypeptide: MRVLLIIAGLALLSVVCYTSEMKEQNSLNEVLSAFFDVEEPPEKGCIICF.

The N-terminal stretch at 1–19 is a signal peptide; the sequence is MRVLLIIAGLALLSVVCYT.

It belongs to the neurotoxin 10 (Hwtx-1) family. 67 (Jztx-67) subfamily. Expressed by the venom gland.

It localises to the secreted. The polypeptide is U37-theraphotoxin-Cg1b (Chilobrachys guangxiensis (Chinese earth tiger tarantula)).